A 266-amino-acid polypeptide reads, in one-letter code: uncharacterized protein (266 aa).

This is an uncharacterized protein from Methanocaldococcus jannaschii (strain ATCC 43067 / DSM 2661 / JAL-1 / JCM 10045 / NBRC 100440) (Methanococcus jannaschii).